Reading from the N-terminus, the 616-residue chain is Prolactin receptor (616 aa).

Positions methionine 1–glycine 24 are cleaved as a signal peptide. At glutamine 25–aspartate 234 the chain is on the extracellular side. Fibronectin type-III domains follow at residues proline 27–aspartate 128 and proline 129–aspartate 229. Cysteines 36 and 46 form a disulfide. A glycan (N-linked (GlcNAc...) asparagine) is linked at asparagine 59. Cysteine 75 and cysteine 86 are disulfide-bonded. N-linked (GlcNAc...) asparagine glycans are attached at residues asparagine 104 and asparagine 132. Zn(2+) contacts are provided by aspartate 211 and histidine 212. Positions tryptophan 215–serine 219 match the WSXWS motif motif. Residues isoleucine 235–leucine 258 traverse the membrane as a helical segment. Over lysine 259–histidine 616 the chain is Cytoplasmic. The Box 1 motif motif lies at isoleucine 267–lysine 275. Disordered regions lie at residues methionine 326 to histidine 375, glutamine 454 to lysine 492, and glutamate 568 to proline 593. Residues glycine 463–glutamine 482 show a composition bias toward basic and acidic residues.

The protein belongs to the type I cytokine receptor family. Type 1 subfamily. Interacts with SMARCA1. Interacts with NEK3 and VAV2 and this interaction is prolactin-dependent.

It localises to the membrane. Its function is as follows. This is a receptor for the anterior pituitary hormone prolactin. This Oryctolagus cuniculus (Rabbit) protein is Prolactin receptor (PRLR).